A 3206-amino-acid chain; its full sequence is Highly reducing polyketide synthase ltbA (3206 aa).

One can recognise a Ketosynthase family 3 (KS3) domain in the interval 5–434; it reads PAPIAIIGVG…GTNCHVILEA (430 aa). Residues Cys179, His314, and His354 each act as for beta-ketoacyl synthase activity in the active site. Positions 441 to 463 are enriched in polar residues; the sequence is PTGTNGIKTNGTRINGIKTNGAD. A disordered region spans residues 441–472; that stretch reads PTGTNGIKTNGTRINGIKTNGADTNERESMKN. A malonyl-CoA:ACP transacylase (MAT) domain region spans residues 575 to 890; sequence VFSGQGAQWH…EYLSALQRNT (316 aa). An N-terminal hotdog fold region spans residues 958-1098; it reads HDLLGLFDPA…GEITVEYETD (141 aa). Residues 958 to 1278 are dehydratase (DH) domain; sequence HDLLGLFDPA…LLVNLRAIGE (321 aa). Residues 958–1284 form the PKS/mFAS DH domain; it reads HDLLGLFDPA…AIGETREDED (327 aa). His990 (proton acceptor; for dehydratase activity) is an active-site residue. A C-terminal hotdog fold region spans residues 1128–1284; that stretch reads DTDMTKSEFY…AIGETREDED (157 aa). Asp1193 serves as the catalytic Proton donor; for dehydratase activity. The segment at 1450 to 1640 is methyltransferase (CMet) domain; that stretch reads ESGILVGPYE…LARNGFGGIH (191 aa). Positions 1871–2185 are enoyl reductase (ER) domain; the sequence is LLSSLRFVDD…RKHTGKVVLQ (315 aa). The tract at residues 2208–2395 is ketoreductase (KR) domain; sequence GTYVAAGGLG…SVDAHGALKE (188 aa). Positions 2499 to 2577 constitute a Carrier domain; that stretch reads EEAEQLIRDA…ALAATVASRS (79 aa). Ser2537 bears the O-(pantetheine 4'-phosphoryl)serine mark. The tract at residues 2584–2611 is disordered; it reads IRHSSRLQEATTQAENKDAPKNEKEGPS. A compositionally biased stretch (basic and acidic residues) spans 2598–2610; sequence ENKDAPKNEKEGP. Residues 2994–3206 form a carnitine O-acyltransferase (cAT) domain region; sequence HLIPSFGKAV…IKTIIQAGQE (213 aa).

Requires pantetheine 4'-phosphate as cofactor.

It participates in secondary metabolite biosynthesis. Highly reducing polyketide synthase; part of the gene cluster that mediates the biosynthesis of luteodienoside A, a glycosylated polyketide consisting of an unusual 1-O-beta-D-glucopyranosyl-myo-inositol (glucinol) ester of 3-hydroxy-2,2,4-trimethylocta-4,6-dienoic acid. LtbA produces the trimethylated polyketide chain from acetyl-CoA, malonyl-CoA and S-adenosylmethionine (SAM). The ltbA carnitine O-acyltransferase (cAT) domain then uses glucinol produced by the glycosyltransferase ltbB as an offloading substrate to release luteodienoside A. Furthermore, the PKS C-methyltransferase (CMeT) domain is capable of catalysing gem-dimethylation of the 3-hydroxy-2,2,4-trimethylocta-4,6-dienoic acid intermediate, without requiring reversible product release and recapture by the cAT domain. Since ltbA and ltbB are sufficient for the biosynthesis of luteodienoside A, the functions of the methyltransferase ltbC and the FAD-binding monooxygenase ltbD within the pathway remain obscur. This is Highly reducing polyketide synthase ltbA from Aspergillus luteorubrus.